The primary structure comprises 66 residues: ATP synthase F(0) complex subunit 8 (66 aa).

Residues 8–24 form a helical membrane-spanning segment; that stretch reads IWLLAVVIVLTTLMIFL. K54 carries the post-translational modification N6-acetyllysine; alternate. K54 bears the N6-succinyllysine; alternate mark. K57 is subject to N6-acetyllysine.

This sequence belongs to the ATPase protein 8 family. As to quaternary structure, component of the ATP synthase complex composed at least of ATP5F1A/subunit alpha, ATP5F1B/subunit beta, ATP5MC1/subunit c (homooctomer), MT-ATP6/subunit a, MT-ATP8/subunit 8, ATP5ME/subunit e, ATP5MF/subunit f, ATP5MG/subunit g, ATP5MK/subunit k, ATP5MJ/subunit j, ATP5F1C/subunit gamma, ATP5F1D/subunit delta, ATP5F1E/subunit epsilon, ATP5PF/subunit F6, ATP5PB/subunit b, ATP5PD/subunit d, ATP5PO/subunit OSCP. ATP synthase complex consists of a soluble F(1) head domain (subunits alpha(3) and beta(3)) - the catalytic core - and a membrane F(0) domain - the membrane proton channel (subunits c, a, 8, e, f, g, k and j). These two domains are linked by a central stalk (subunits gamma, delta, and epsilon) rotating inside the F1 region and a stationary peripheral stalk (subunits F6, b, d, and OSCP). Interacts with PRICKLE3.

The protein localises to the mitochondrion membrane. Its function is as follows. Subunit 8, of the mitochondrial membrane ATP synthase complex (F(1)F(0) ATP synthase or Complex V) that produces ATP from ADP in the presence of a proton gradient across the membrane which is generated by electron transport complexes of the respiratory chain. ATP synthase complex consist of a soluble F(1) head domain - the catalytic core - and a membrane F(1) domain - the membrane proton channel. These two domains are linked by a central stalk rotating inside the F(1) region and a stationary peripheral stalk. During catalysis, ATP synthesis in the catalytic domain of F(1) is coupled via a rotary mechanism of the central stalk subunits to proton translocation. In vivo, can only synthesize ATP although its ATP hydrolase activity can be activated artificially in vitro. Part of the complex F(0) domain. The sequence is that of ATP synthase F(0) complex subunit 8 from Mammuthus primigenius (Siberian woolly mammoth).